The sequence spans 252 residues: NADH-quinone oxidoreductase subunit E (252 aa).

The [2Fe-2S] cluster site is built by Cys-114, Cys-119, Cys-155, and Cys-159. Residues 211–252 (LAGLPDQRPDEGQGGPGAPTLAGLQVARKNDMQAPPTPGADE) form a disordered region.

The protein belongs to the complex I 24 kDa subunit family. It depends on [2Fe-2S] cluster as a cofactor.

The catalysed reaction is a quinone + NADH + 5 H(+)(in) = a quinol + NAD(+) + 4 H(+)(out). Its function is as follows. NDH-1 shuttles electrons from NADH, via FMN and iron-sulfur (Fe-S) centers, to quinones in the respiratory chain. The immediate electron acceptor for the enzyme in this species is believed to be menaquinone. Couples the redox reaction to proton translocation (for every two electrons transferred, four hydrogen ions are translocated across the cytoplasmic membrane), and thus conserves the redox energy in a proton gradient. This Mycobacterium bovis (strain ATCC BAA-935 / AF2122/97) protein is NADH-quinone oxidoreductase subunit E (nuoE).